The following is a 966-amino-acid chain: Integrator complex subunit 7 (966 aa).

Residues Ser-338 and Ser-809 each carry the phosphoserine modification. A disordered region spans residues 941-966 (LQQQAQQPLQPQPLPQPQPRSAYTRF).

Belongs to the Integrator subunit 7 family. As to quaternary structure, component of the Integrator complex, composed of core subunits INTS1, INTS2, INTS3, INTS4, INTS5, INTS6, INTS7, INTS8, INTS9/RC74, INTS10, INTS11/CPSF3L, INTS12, INTS13, INTS14 and INTS15. The core complex associates with protein phosphatase 2A subunits PPP2CA and PPP2R1A, to form the Integrator-PP2A (INTAC) complex. Interacts with NABP2.

It localises to the nucleus. Its subcellular location is the chromosome. The protein localises to the cytoplasm. Functionally, component of the integrator complex, a multiprotein complex that terminates RNA polymerase II (Pol II) transcription in the promoter-proximal region of genes. The integrator complex provides a quality checkpoint during transcription elongation by driving premature transcription termination of transcripts that are unfavorably configured for transcriptional elongation: the complex terminates transcription by (1) catalyzing dephosphorylation of the C-terminal domain (CTD) of Pol II subunit POLR2A/RPB1 and SUPT5H/SPT5, (2) degrading the exiting nascent RNA transcript via endonuclease activity and (3) promoting the release of Pol II from bound DNA. The integrator complex is also involved in terminating the synthesis of non-coding Pol II transcripts, such as enhancer RNAs (eRNAs), small nuclear RNAs (snRNAs), telomerase RNAs and long non-coding RNAs (lncRNAs). May be not involved in the recruitment of cytoplasmic dynein to the nuclear envelope by different components of the INT complex. Plays a role in DNA damage response (DDR) signaling during the S phase. This Mus musculus (Mouse) protein is Integrator complex subunit 7 (Ints7).